The sequence spans 200 residues: Superoxide dismutase [Fe] (200 aa).

Fe cation-binding residues include His-28, His-82, Asp-165, and His-169.

It belongs to the iron/manganese superoxide dismutase family. In terms of assembly, homodimer. Fe cation serves as cofactor.

It carries out the reaction 2 superoxide + 2 H(+) = H2O2 + O2. Destroys superoxide anion radicals which are normally produced within the cells and which are toxic to biological systems. This Rhodobacter capsulatus (Rhodopseudomonas capsulata) protein is Superoxide dismutase [Fe] (sodB).